The sequence spans 486 residues: UDP-N-acetylmuramate--L-alanine ligase (486 aa).

Gly-123–Thr-129 lines the ATP pocket.

It belongs to the MurCDEF family.

The protein localises to the cytoplasm. It carries out the reaction UDP-N-acetyl-alpha-D-muramate + L-alanine + ATP = UDP-N-acetyl-alpha-D-muramoyl-L-alanine + ADP + phosphate + H(+). The protein operates within cell wall biogenesis; peptidoglycan biosynthesis. Cell wall formation. This is UDP-N-acetylmuramate--L-alanine ligase from Pseudomonas syringae pv. syringae (strain B728a).